Reading from the N-terminus, the 303-residue chain is Secreted mono- and diacylglycerol lipase LIP4 (303 aa).

The signal sequence occupies residues 1-16; that stretch reads MHFLAFLLCLIPLALC. The cysteines at positions 54 and 293 are disulfide-linked. Residue Ser167 is the Nucleophile of the active site. The active site involves Asp224.

The protein belongs to the AB hydrolase superfamily. Lipase family. Class 3 subfamily.

Its subcellular location is the secreted. The catalysed reaction is a monoacylglycerol + H2O = glycerol + a fatty acid + H(+). The enzyme catalyses a diacylglycerol + H2O = a monoacylglycerol + a fatty acid + H(+). Secreted lipase involved in Dandruff and seborrheic dermatitis (D/SD) probably via lipase-mediated breakdown of sebaceous lipids and release of irritating free fatty acids. Shows activity against monoglyceride and diglyceride substrates. Due to an absence of fatty acid synthase genes in Malassezia species, secretory lipases are essential for the yeast to generate free fatty acids from degradation of sebum and assimilate them as lipid sources for growth. Plays an essential role at the pathogen-host interface during disease progression. This is Secreted mono- and diacylglycerol lipase LIP4 from Malassezia restricta (strain ATCC 96810 / NBRC 103918 / CBS 7877) (Seborrheic dermatitis infection agent).